Reading from the N-terminus, the 137-residue chain is Small ribosomal subunit protein uS9 (137 aa).

The protein belongs to the universal ribosomal protein uS9 family.

In Picosynechococcus sp. (strain ATCC 27264 / PCC 7002 / PR-6) (Agmenellum quadruplicatum), this protein is Small ribosomal subunit protein uS9.